The chain runs to 82 residues: Putative membrane protein insertion efficiency factor (82 aa).

This sequence belongs to the UPF0161 family.

The protein localises to the cell inner membrane. Could be involved in insertion of integral membrane proteins into the membrane. This Rickettsia africae (strain ESF-5) protein is Putative membrane protein insertion efficiency factor.